A 216-amino-acid polypeptide reads, in one-letter code: Small ribosomal subunit protein uS3c (216 aa).

The KH type-2 domain maps to 43 to 118 (IKNYIQKNIR…KLNIAIVKVA (76 aa)).

Belongs to the universal ribosomal protein uS3 family. Part of the 30S ribosomal subunit.

The protein resides in the plastid. The protein localises to the chloroplast. The protein is Small ribosomal subunit protein uS3c (rps3) of Glycine max (Soybean).